Reading from the N-terminus, the 54-residue chain is Large ribosomal subunit protein bL33A (54 aa).

Belongs to the bacterial ribosomal protein bL33 family.

The polypeptide is Large ribosomal subunit protein bL33A (Mycolicibacterium gilvum (strain PYR-GCK) (Mycobacterium gilvum (strain PYR-GCK))).